A 313-amino-acid polypeptide reads, in one-letter code: Phosphate import ATP-binding protein PstB 2 (313 aa).

Polar residues predominate over residues 1-33; sequence MSDSINTEPSTDTQTNGERTVETTSPSAETTAG. Residues 1-40 are disordered; the sequence is MSDSINTEPSTDTQTNGERTVETTSPSAETTAGESEEQVR. The region spanning 54–308 is the ABC transporter domain; that stretch reads LSVENLDVWY…PESQRVEDYI (255 aa). Residue 86-93 participates in ATP binding; the sequence is GPSGCGKS.

This sequence belongs to the ABC transporter superfamily. Phosphate importer (TC 3.A.1.7) family. The complex is composed of two ATP-binding proteins (PstB), two transmembrane proteins (PstC and PstA) and a solute-binding protein (PstS).

Its subcellular location is the cell membrane. The catalysed reaction is phosphate(out) + ATP + H2O = ADP + 2 phosphate(in) + H(+). In terms of biological role, part of the ABC transporter complex PstSACB involved in phosphate import. Responsible for energy coupling to the transport system. In Haloarcula marismortui (strain ATCC 43049 / DSM 3752 / JCM 8966 / VKM B-1809) (Halobacterium marismortui), this protein is Phosphate import ATP-binding protein PstB 2.